Consider the following 77-residue polypeptide: Vacuolar ATPase assembly integral membrane protein VMA21 (77 aa).

Over 1 to 8 the chain is Cytoplasmic; sequence MAVDVPTS. The helical transmembrane segment at 9–29 threads the bilayer; it reads VIVKLMFFTLAMVSFPVLTFF. The Lumenal portion of the chain corresponds to 30 to 41; that stretch reads VSQQYTSNTLVN. The helical transmembrane segment at 42–62 threads the bilayer; sequence GGLAALAANVVLFAYVIMAFS. Residues 63–77 are Cytoplasmic-facing; sequence EDVPQSDGKESKKQQ. The Prevents secretion from ER motif lies at 74–77; sequence KKQQ.

Belongs to the VMA21 family.

It is found in the endoplasmic reticulum membrane. Its subcellular location is the endoplasmic reticulum-Golgi intermediate compartment membrane. The protein localises to the cytoplasmic vesicle. The protein resides in the COPII-coated vesicle membrane. Functionally, required for the assembly of the V0 complex of the vacuolar ATPase (V-ATPase) in the endoplasmic reticulum. This chain is Vacuolar ATPase assembly integral membrane protein VMA21, found in Eremothecium gossypii (strain ATCC 10895 / CBS 109.51 / FGSC 9923 / NRRL Y-1056) (Yeast).